Consider the following 743-residue polypeptide: Capsid protein (743 aa).

Positions 665 to 706 (YVPPEEDFNIQERQQREQRPWTSESESEAEAQEETQAGSVRE) are disordered.

The protein belongs to the anelloviridae capsid protein family.

It localises to the virion. Self assemble to form an icosahedral capsid. This Torque teno virus (isolate Human/China/CT39F/2001) (TTV) protein is Capsid protein.